A 511-amino-acid chain; its full sequence is 2,3-bisphosphoglycerate-independent phosphoglycerate mutase (511 aa).

Asp-12 contributes to the Mn(2+) binding site. Position 36 is a phosphotyrosine (Tyr-36). Ser-62 is a Mn(2+) binding site. Catalysis depends on Ser-62, which acts as the Phosphoserine intermediate. Substrate-binding positions include His-123, 153–154 (RD), Arg-185, Arg-191, 261–264 (RPDR), and Lys-336. Residues Asp-403, His-407, Asp-444, His-445, and His-462 each coordinate Mn(2+).

The protein belongs to the BPG-independent phosphoglycerate mutase family. Monomer. Mn(2+) is required as a cofactor.

The catalysed reaction is (2R)-2-phosphoglycerate = (2R)-3-phosphoglycerate. It functions in the pathway carbohydrate degradation; glycolysis; pyruvate from D-glyceraldehyde 3-phosphate: step 3/5. Its function is as follows. Essential for rapid growth and for sporulation. Catalyzes the interconversion of 2-phosphoglycerate and 3-phosphoglycerate. The chain is 2,3-bisphosphoglycerate-independent phosphoglycerate mutase from Bacillus pumilus (strain SAFR-032).